Consider the following 326-residue polypeptide: Glyoxylate/hydroxypyruvate reductase B (326 aa).

Residues Arg-237 and Glu-266 contribute to the active site. His-285 functions as the Proton donor in the catalytic mechanism.

The protein belongs to the D-isomer specific 2-hydroxyacid dehydrogenase family. GhrB subfamily. Homodimer.

It is found in the cytoplasm. The catalysed reaction is glycolate + NADP(+) = glyoxylate + NADPH + H(+). It carries out the reaction (R)-glycerate + NAD(+) = 3-hydroxypyruvate + NADH + H(+). The enzyme catalyses (R)-glycerate + NADP(+) = 3-hydroxypyruvate + NADPH + H(+). Functionally, catalyzes the NADPH-dependent reduction of glyoxylate and hydroxypyruvate into glycolate and glycerate, respectively. The polypeptide is Glyoxylate/hydroxypyruvate reductase B (Yersinia pseudotuberculosis serotype O:3 (strain YPIII)).